The primary structure comprises 153 residues: SsrA-binding protein (153 aa).

The protein belongs to the SmpB family.

It is found in the cytoplasm. Its function is as follows. Required for rescue of stalled ribosomes mediated by trans-translation. Binds to transfer-messenger RNA (tmRNA), required for stable association of tmRNA with ribosomes. tmRNA and SmpB together mimic tRNA shape, replacing the anticodon stem-loop with SmpB. tmRNA is encoded by the ssrA gene; the 2 termini fold to resemble tRNA(Ala) and it encodes a 'tag peptide', a short internal open reading frame. During trans-translation Ala-aminoacylated tmRNA acts like a tRNA, entering the A-site of stalled ribosomes, displacing the stalled mRNA. The ribosome then switches to translate the ORF on the tmRNA; the nascent peptide is terminated with the 'tag peptide' encoded by the tmRNA and targeted for degradation. The ribosome is freed to recommence translation, which seems to be the essential function of trans-translation. In Orientia tsutsugamushi (strain Ikeda) (Rickettsia tsutsugamushi), this protein is SsrA-binding protein.